Consider the following 315-residue polypeptide: Replication factor C small subunit (315 aa).

Residue 43–50 coordinates ATP; it reads GSPGVGKT.

Belongs to the activator 1 small subunits family. RfcS subfamily. As to quaternary structure, heteromultimer composed of small subunits (RfcS) and large subunits (RfcL).

Functionally, part of the RFC clamp loader complex which loads the PCNA sliding clamp onto DNA. In Methanococcus maripaludis (strain C6 / ATCC BAA-1332), this protein is Replication factor C small subunit.